The primary structure comprises 396 residues: Purine ribonucleoside efflux pump NepI (396 aa).

At 1–21 (MSEFIAENRGADAITRPNWSA) the chain is on the cytoplasmic side. A helical transmembrane segment spans residues 22-42 (VFSVAFCVACLIIVEFLPVSL). The Periplasmic segment spans residues 43–54 (LTPMAQDLGISE). The chain crosses the membrane as a helical span at residues 55 to 75 (GVAGQSVTVTAFVAMFASLFI). Over 76 to 85 (TQTIQATDRR) the chain is Cytoplasmic. A helical membrane pass occupies residues 86-106 (YVVILFAVLLTLSCLLVSFAN). Serine 107 is a topological domain (periplasmic). A helical membrane pass occupies residues 108-128 (FSLLLIGRACLGLALGGFWAM). Over 129-147 (SASLTMRLVPPRTVPKALS) the chain is Cytoplasmic. The chain crosses the membrane as a helical span at residues 148-168 (VIFGAVSIALVIAAPLGSFLG). Topologically, residues 169-175 (ELIGWRN) are periplasmic. Residues 176–196 (VFNAAAVMGVLCIFWIIKSLP) traverse the membrane as a helical segment. Residues 197-215 (SLPGEPSHQKQNTFRLLQR) are Cytoplasmic-facing. The helical transmembrane segment at 216-236 (PGVMAGMIAIFMSFAGQFAFF) threads the bilayer. At 237 to 255 (TYIRPVYMNLAGFGVDGLT) the chain is on the periplasmic side. The chain crosses the membrane as a helical span at residues 256–276 (LVLLSFGIASFIGTSLSSFIL). Topologically, residues 277 to 281 (KRSVK) are cytoplasmic. Residues 282-302 (LALAGAPLILAVSALVLTLWG) traverse the membrane as a helical segment. The Periplasmic segment spans residues 303-305 (SDK). The helical transmembrane segment at 306–326 (IVATGVAIIWGLTFALVPVGW) threads the bilayer. Topologically, residues 327–343 (STWITRSLADQAEKAGS) are cytoplasmic. A helical transmembrane segment spans residues 344–364 (IQVAVIQLANTCGAAIGGYAL). The Periplasmic portion of the chain corresponds to 365–366 (DN). Residues 367-387 (IGLTSPLMLSGTLMLLTALLV) form a helical membrane-spanning segment. Topologically, residues 388–396 (TAKVKMKKS) are cytoplasmic.

It belongs to the major facilitator superfamily. DHA1 family. NepI (TC 2.A.1.2.26) subfamily.

It localises to the cell inner membrane. The enzyme catalyses inosine(in) + H(+)(out) = inosine(out) + H(+)(in). It carries out the reaction guanosine(in) + H(+)(out) = guanosine(out) + H(+)(in). In terms of biological role, involved in the efflux of purine ribonucleosides, such as inosine and guanosine. The sequence is that of Purine ribonucleoside efflux pump NepI from Shigella flexneri.